A 325-amino-acid polypeptide reads, in one-letter code: Protein VP6-B (325 aa).

Disordered regions lie at residues 23-123 and 176-229; these read INLI…TIGA and VAEQ…EEQA. 2 stretches are compositionally biased toward basic and acidic residues: residues 32-52 and 61-79; these read ESGK…ESKD and SQKK…DRRI. The span at 106–123 shows a compositional bias: gly residues; sequence KVGGGGGNADAGVGTIGA. Composition is skewed to basic and acidic residues over residues 176-201 and 210-226; these read VAEQ…AAER and PHGD…KTSE.

The protein belongs to the orbivirus VP6 family.

It is found in the virion. In terms of biological role, surrounds and interacts with the genomic dsRNA. Possesses ss- and dsRNA-binding capacity. Its hydrophilic nature and capability to bind ss- and dsRNA suggest that it interacts with BTV genomic RNA. The protein is Protein VP6-B (Segment-9) of Bluetongue virus 10 (isolate USA) (BTV 10).